Here is a 165-residue protein sequence, read N- to C-terminus: Transcription factor E (165 aa).

An HTH TFE/IIEalpha-type domain is found at 5–87 (NDPVVRGYLL…LWQLDLSDIE (83 aa)).

It belongs to the TFE family. In terms of assembly, monomer. Interaction with RNA polymerase subunits RpoF and RpoE is necessary for Tfe stimulatory transcription activity. Able to interact with Tbp and RNA polymerase in the absence of DNA promoter. Interacts both with the preinitiation and elongation complexes.

Transcription factor that plays a role in the activation of archaeal genes transcribed by RNA polymerase. Facilitates transcription initiation by enhancing TATA-box recognition by TATA-box-binding protein (Tbp), and transcription factor B (Tfb) and RNA polymerase recruitment. Not absolutely required for transcription in vitro, but particularly important in cases where Tbp or Tfb function is not optimal. It dynamically alters the nucleic acid-binding properties of RNA polymerases by stabilizing the initiation complex and destabilizing elongation complexes. Seems to translocate with the RNA polymerase following initiation and acts by binding to the non template strand of the transcription bubble in elongation complexes. The chain is Transcription factor E from Methanococcoides burtonii (strain DSM 6242 / NBRC 107633 / OCM 468 / ACE-M).